Reading from the N-terminus, the 225-residue chain is Large ribosomal subunit protein bL25 (225 aa).

The tract at residues 197 to 225 (PQREEQMEDTDTAAADEEGDKEEDADKQE) is disordered. Residues 202–225 (QMEDTDTAAADEEGDKEEDADKQE) are compositionally biased toward acidic residues.

Belongs to the bacterial ribosomal protein bL25 family. CTC subfamily. In terms of assembly, part of the 50S ribosomal subunit; part of the 5S rRNA/L5/L18/L25 subcomplex. Contacts the 5S rRNA. Binds to the 5S rRNA independently of L5 and L18.

This is one of the proteins that binds to the 5S RNA in the ribosome where it forms part of the central protuberance. This Dichelobacter nodosus (strain VCS1703A) protein is Large ribosomal subunit protein bL25.